The following is a 387-amino-acid chain: Mitochondrial import inner membrane translocase subunit TIM50 (387 aa).

The N-terminal 26 residues, 1 to 26, are a transit peptide targeting the mitochondrion; that stretch reads MSAVSVYPMCVRASRGLLRLRQGARC. At 27–100 the chain is on the mitochondrial matrix side; the sequence is STAPPLLDVV…QKENTAYAKK (74 aa). A disordered region spans residues 61–93; that stretch reads LQQQQKSQEQPPPEGEDSGHKQDEQGEDKKQKE. A compositionally biased stretch (basic and acidic residues) spans 77 to 93; that stretch reads DSGHKQDEQGEDKKQKE. The chain crosses the membrane as a helical span at residues 101 to 121; it reads MVLRLAGIMGLGGTVGIVYIF. Over 122-387 the chain is Mitochondrial intermembrane; the sequence is GSNSVDEQGN…AGRFWSRKQQ (266 aa). An FCP1 homology domain is found at 178-321; the sequence is YYQPPYTLVL…YDLAAFLKTI (144 aa).

This sequence belongs to the TIM50 family. Component of the TIM23 complex at least composed of timm23, timm17 and timm50.

Its subcellular location is the mitochondrion inner membrane. In terms of biological role, essential component of the TIM23 complex, a complex that mediates the translocation of transit peptide-containing proteins across the mitochondrial inner membrane. The protein is Mitochondrial import inner membrane translocase subunit TIM50 (timm50) of Danio rerio (Zebrafish).